The sequence spans 290 residues: Eukaryotic translation initiation factor 3 subunit G (290 aa).

The disordered stretch occupies residues 1–34; the sequence is MSRLGNRAADWADDEEFDDPSALPAQQVTTNKDG. The RRM domain maps to 210 to 288; that stretch reads ATLRVTNVSE…LILRVEFAKR (79 aa).

It belongs to the eIF-3 subunit G family. As to quaternary structure, component of the eukaryotic translation initiation factor 3 (eIF-3) complex.

Its subcellular location is the cytoplasm. Functionally, RNA-binding component of the eukaryotic translation initiation factor 3 (eIF-3) complex, which is involved in protein synthesis of a specialized repertoire of mRNAs and, together with other initiation factors, stimulates binding of mRNA and methionyl-tRNAi to the 40S ribosome. The eIF-3 complex specifically targets and initiates translation of a subset of mRNAs involved in cell proliferation. This subunit can bind 18S rRNA. This is Eukaryotic translation initiation factor 3 subunit G from Neosartorya fischeri (strain ATCC 1020 / DSM 3700 / CBS 544.65 / FGSC A1164 / JCM 1740 / NRRL 181 / WB 181) (Aspergillus fischerianus).